Reading from the N-terminus, the 253-residue chain is MTDCVFITGATSGFGRAAAHRFAAAGWSLVLTGRRLERLEALKEELQGRVPVHIIALDVRDSDVVDAAVAALPEGFTRVRTLLNNAGLALAPQSAQHTDRSDWHTMIDTNVTGLVNVTHALLPTLIDVGEGATIVNVGSIAGQWPYPGSHVYGASKAFVKQFSYNLRCDLLGTGVRVTDLAPGIAETEFTLVRTGGDQAASDALYRGTTALTAEDIAEQMFYIATLPPHVNFNRLEVMPTRQAWSAFAIDYDA.

Residue phenylalanine 6–valine 30 participates in NADP(+) binding. Residue serine 139 participates in substrate binding. Residue tyrosine 152 is the Proton acceptor of the active site.

It belongs to the short-chain dehydrogenases/reductases (SDR) family. As to quaternary structure, homodimer and heterotetramer.

It catalyses the reaction 2-hydroxyethane-1-sulfonate + NADP(+) = sulfoacetaldehyde + NADPH + H(+). It participates in organosulfur degradation. Catalyzes the formation of isethionate from 2-sulfoacetaldehyde in the deaminative pathway of taurine. The enzyme is specific for NADPH; NADH is not a substrate. Responsible for most of the activity observed in taurine-grown cells. In Chromohalobacter salexigens (strain ATCC BAA-138 / DSM 3043 / CIP 106854 / NCIMB 13768 / 1H11), this protein is Sulfoacetaldehyde reductase (isfD).